The following is a 3414-amino-acid chain: Genome polyprotein (3414 aa).

The interval 1 to 30 (MVKKAILKGKGGGPPRRVSKETATKTRQPR) is disordered. Over 2–98 (VKKAILKGKG…LQKRGKRRSA (97 aa)) the chain is Cytoplasmic. Positions 97 to 117 (SATDWMSWLLVITLLGMTLAA) are cleaved as a propeptide — ER anchor for the capsid protein C, removed in mature form by serine protease NS3. The chain crosses the membrane as a helical span at residues 99–119 (TDWMSWLLVITLLGMTLAATV). The Extracellular segment spans residues 120–242 (RKERDGSTVI…HLTRVEGWVW (123 aa)). Asn144 is a glycosylation site (N-linked (GlcNAc...) asparagine; by host). Residues 243 to 260 (KNKLLALAMVTVVWLTLE) traverse the membrane as a helical segment. Position 261 (Ser261) is a topological domain, cytoplasmic. The helical transmembrane segment at 262-280 (VVTRVAVLVVLLCLAPVYA) threads the bilayer. Topologically, residues 281–727 (SRCTHLENRD…HTVLGGAFNS (447 aa)) are extracellular. 6 cysteine pairs are disulfide-bonded: Cys283-Cys310, Cys340-Cys396, Cys340-Cys401, Cys354-Cys385, Cys372-Cys396, and Cys372-Cys401. The tract at residues 378-391 (DRGWGNHCGLFGKG) is fusion peptide. Asn434 is a glycosylation site (N-linked (GlcNAc...) asparagine; by host). Intrachain disulfides connect Cys466–Cys570 and Cys587–Cys618. A helical transmembrane segment spans residues 728 to 748 (IFGGVGFLPKLLLGVALAWLG). The Extracellular portion of the chain corresponds to 749–755 (LNMRNPT). Residues 756-776 (MSMSFLLAGGLVLAMTLGVGA) form a helical membrane-spanning segment. The Extracellular segment spans residues 777-1132 (DVGCAVDTER…RSMVVADNGE (356 aa)). Disulfide bonds link Cys780/Cys791, Cys831/Cys920, Cys955/Cys1000, Cys1057/Cys1106, Cys1068/Cys1090, and Cys1089/Cys1093. N-linked (GlcNAc...) asparagine; by host glycans are attached at residues Asn861, Asn983, and Asn999. The helical transmembrane segment at 1133 to 1153 (LLSEGGVPGIVALFVVLEYII) threads the bilayer. Residues 1154 to 1158 (RRRPS) lie on the Cytoplasmic side of the membrane. The chain crosses the membrane as a helical span at residues 1159 to 1179 (TGTTVVWGGIVVLALLVTGMV). Residues 1180 to 1187 (RIESLVRY) lie on the Lumenal side of the membrane. The chain crosses the membrane as a helical span at residues 1188–1208 (VVAVGITFHLELGPEIVALML). Over 1209–1293 (LQAVFELRVG…LLMALMTQQD (85 aa)) the chain is Cytoplasmic. Residues 1294–1314 (VVTVHHGLVCFLSVASACSVW) traverse the membrane as a helical segment. Over 1315 to 1327 (RLLKGHREQKGLT) the chain is Lumenal. The chain crosses the membrane as a helical span at residues 1328 to 1348 (WVVPLAGLLGGEGSGIRLLAF). Topologically, residues 1349-1359 (WELSAHRGRRS) are cytoplasmic. The helical transmembrane segment at 1360–1378 (FSEPLTVVGVMLTLASGMM) threads the bilayer. Residues 1379 to 1382 (RHTS) lie on the Lumenal side of the membrane. Residues 1383–1403 (QEALCALAVASFLLLMLVLGT) form a helical membrane-spanning segment. Over 1404 to 1454 (RKMQLVAEWSGCVEWYPELVNEGGEVSLRVRQDAMGNFHLTELEKEERMMA) the chain is Cytoplasmic. An interacts with and activates NS3 protease region spans residues 1410–1449 (AEWSGCVEWYPELVNEGGEVSLRVRQDAMGNFHLTELEKE). Residues 1455-1475 (FWLIAGLAASAIHWSGILGVM) constitute an intramembrane region (helical). The Cytoplasmic segment spans residues 1476–2160 (GLWTLTEMLR…RMAERDAPEA (685 aa)). The Peptidase S7 domain maps to 1490–1669 (SDLVFSGQGG…EAEKSRPNLP (180 aa)). Residues His1543, Asp1567, and Ser1627 each act as charge relay system; for serine protease NS3 activity in the active site. One can recognise a Helicase ATP-binding domain in the interval 1675–1831 (TGWTSKGQIT…ESNGAITSEE (157 aa)). 1688 to 1695 (MHPGSGKT) serves as a coordination point for ATP. Positions 1779–1782 (DEAH) match the DEAH box motif. A Helicase C-terminal domain is found at 1841–2000 (DGFDWITEYE…TLRGPVATFY (160 aa)). Lys1883 carries the N6-acetyllysine; by host modification. A helical membrane pass occupies residues 2161–2181 (FLTMVEMMVLGLATLGVIWCF). Topologically, residues 2182–2189 (VVRTSISR) are lumenal. The helical intramembrane region spans 2190–2210 (MMLGTLVLLASLLLLWAGGVG). Residue Tyr2211 is a topological domain, lumenal. Residues 2212–2232 (GNMAGVALIFYTLLTVLQPEA) form a helical membrane-spanning segment. Over 2233 to 2244 (GKQRSSDDNKLA) the chain is Cytoplasmic. A helical transmembrane segment spans residues 2245–2265 (YFLLTLCSLAGLVAANEMGFL). Over 2266–2299 (EKTKADLSTALWSEREEPRPWSEWTNVDIQPARS) the chain is Lumenal. The segment at residues 2300–2320 (WGTYVLVVSLFTPYIIHQLQT) is an intramembrane region (helical). Residues 2321 to 2343 (KIQQLVNSAVASGAQAMRDLGGG) lie on the Lumenal side of the membrane. Positions 2344–2364 (APFFGVAGHVMTLGVVSLIGA) form an intramembrane region, helical. The Lumenal segment spans residues 2365–2368 (TPTS). Residues 2369-2389 (LMVGVGLAALHLAIVVSGLEA) traverse the membrane as a helical segment. Residues 2390–2432 (ELTQRAHKVFFSAMVRNPMVDGDVINPFGEGEAKPALYERKMS) are Cytoplasmic-facing. A helical membrane pass occupies residues 2433–2453 (LVLATVLCLMSVVMNRTVASI). Over 2454 to 2477 (TEASAVGLAAAGQLLRPEADTLWT) the chain is Lumenal. The chain crosses the membrane as a helical span at residues 2478-2498 (MPVACGMSGVVRGSLWGFLPL). Topologically, residues 2499–3414 (GHRLWLRASG…WELRLESSII (916 aa)) are cytoplasmic. The mRNA cap 0-1 NS5-type MT domain maps to 2512-2776 (GGSEGDTLGD…ELDLGVGTRC (265 aa)). Ser2567 is a binding site for S-adenosyl-L-methionine. Ser2567 carries the phosphoserine modification. Lys2572 serves as the catalytic For 2'-O-MTase activity. 6 residues coordinate S-adenosyl-L-methionine: Gly2597, Trp2598, Thr2615, Ile2616, Asp2642, and Val2643. The For 2'-O-MTase activity role is filled by Asp2657. Ile2658 provides a ligand contact to S-adenosyl-L-methionine. Catalysis depends on for 2'-O-MTase activity residues Lys2694 and Glu2730. The interval 2730–2734 (EMYYS) is interaction with host SCRIB. Tyr2732 contributes to the S-adenosyl-L-methionine binding site. Residues Glu2950, His2954, Cys2959, and Cys2962 each contribute to the Zn(2+) site. The RdRp catalytic domain maps to 3040–3189 (GLFYADDTAG…RPLDDRFGKA (150 aa)). Residues His3224, Cys3240, and Cys3359 each contribute to the Zn(2+) site.

In the N-terminal section; belongs to the class I-like SAM-binding methyltransferase superfamily. mRNA cap 0-1 NS5-type methyltransferase family. Homodimer. Interacts (via N-terminus) with host EXOC1 (via C-terminus); this interaction results in EXOC1 degradation through the proteasome degradation pathway. In terms of assembly, forms heterodimers with envelope protein E in the endoplasmic reticulum and Golgi. As to quaternary structure, homodimer; in the endoplasmic reticulum and Golgi. Interacts with protein prM. Interacts with non-structural protein 1. Homodimer; Homohexamer when secreted. Interacts with envelope protein E. In terms of assembly, interacts (via N-terminus) with serine protease NS3. As to quaternary structure, forms a heterodimer with serine protease NS3. May form homooligomers. Forms a heterodimer with NS2B. Interacts with NS4B. Interacts with unphosphorylated RNA-directed RNA polymerase NS5; this interaction stimulates RNA-directed RNA polymerase NS5 guanylyltransferase activity. In terms of assembly, interacts with serine protease NS3. Interacts with NS1. As to quaternary structure, homodimer. Interacts with host STAT2; this interaction inhibits the phosphorylation of the latter, and, when all viral proteins are present (polyprotein), targets STAT2 for degradation. Interacts with serine protease NS3. Interacts with host SCRIB; this interaction targets NS5 to the cell membrane periphery and nucleus, thereby allowing efficient host nuclear STAT1 inhibition. Post-translationally, specific enzymatic cleavages in vivo yield mature proteins. Cleavages in the lumen of endoplasmic reticulum are performed by host signal peptidase, whereas cleavages in the cytoplasmic side are performed by serine protease NS3. Signal cleavage at the 2K-4B site requires a prior NS3 protease-mediated cleavage at the 4A-2K site. Cleaved in post-Golgi vesicles by a host furin, releasing the mature small envelope protein M, and peptide pr. This cleavage is incomplete as up to 30% of viral particles still carry uncleaved prM. In terms of processing, N-glycosylated. Post-translationally, N-glycosylated. The excreted form is glycosylated and this is required for efficient secretion of the protein from infected cells. Acetylated by host KAT5. Acetylation modulates NS3 RNA-binding and unwinding activities and plays an important positive role for viral replication. In terms of processing, phosphorylated on serines residues. This phosphorylation may trigger NS5 nuclear localization.

It is found in the virion. The protein localises to the host nucleus. Its subcellular location is the host cytoplasm. The protein resides in the host perinuclear region. It localises to the secreted. It is found in the virion membrane. The protein localises to the host endoplasmic reticulum membrane. The catalysed reaction is Selective hydrolysis of -Xaa-Xaa-|-Yaa- bonds in which each of the Xaa can be either Arg or Lys and Yaa can be either Ser or Ala.. It catalyses the reaction RNA(n) + a ribonucleoside 5'-triphosphate = RNA(n+1) + diphosphate. The enzyme catalyses a ribonucleoside 5'-triphosphate + H2O = a ribonucleoside 5'-diphosphate + phosphate + H(+). It carries out the reaction ATP + H2O = ADP + phosphate + H(+). The catalysed reaction is a 5'-end (5'-triphosphoguanosine)-ribonucleoside in mRNA + S-adenosyl-L-methionine = a 5'-end (N(7)-methyl 5'-triphosphoguanosine)-ribonucleoside in mRNA + S-adenosyl-L-homocysteine. It catalyses the reaction a 5'-end (N(7)-methyl 5'-triphosphoguanosine)-ribonucleoside in mRNA + S-adenosyl-L-methionine = a 5'-end (N(7)-methyl 5'-triphosphoguanosine)-(2'-O-methyl-ribonucleoside) in mRNA + S-adenosyl-L-homocysteine + H(+). Plays a role in virus budding by binding to the cell membrane and gathering the viral RNA into a nucleocapsid that forms the core of a mature virus particle. During virus entry, may induce genome penetration into the host cytoplasm after hemifusion induced by the surface proteins. Can migrate to the cell nucleus where it modulates host functions. Its function is as follows. Inhibits RNA silencing by interfering with host Dicer. In terms of biological role, prevents premature fusion activity of envelope proteins in trans-Golgi by binding to envelope protein E at pH6.0. After virion release in extracellular space, gets dissociated from E dimers. Functionally, acts as a chaperone for envelope protein E during intracellular virion assembly by masking and inactivating envelope protein E fusion peptide. prM is the only viral peptide matured by host furin in the trans-Golgi network probably to avoid catastrophic activation of the viral fusion activity in acidic Golgi compartment prior to virion release. prM-E cleavage is inefficient, and many virions are only partially matured. These uncleaved prM would play a role in immune evasion. May play a role in virus budding. Exerts cytotoxic effects by activating a mitochondrial apoptotic pathway through M ectodomain. May display a viroporin activity. Its function is as follows. Binds to host cell surface receptor and mediates fusion between viral and cellular membranes. Envelope protein is synthesized in the endoplasmic reticulum in the form of heterodimer with protein prM. They play a role in virion budding in the ER, and the newly formed immature particle is covered with 60 spikes composed of heterodimer between precursor prM and envelope protein E. The virion is transported to the Golgi apparatus where the low pH causes dissociation of PrM-E heterodimers and formation of E homodimers. prM-E cleavage is inefficient, and many virions are only partially matured. These uncleaved prM would play a role in immune evasion. In terms of biological role, involved in immune evasion, pathogenesis and viral replication. Once cleaved off the polyprotein, is targeted to three destinations: the viral replication cycle, the plasma membrane and the extracellular compartment. Essential for viral replication. Required for formation of the replication complex and recruitment of other non-structural proteins to the ER-derived membrane structures. Excreted as a hexameric lipoparticle that plays a role against host immune response. Antagonizing the complement function. Binds to the host macrophages and dendritic cells. Inhibits signal transduction originating from Toll-like receptor 3 (TLR3). Functionally, component of the viral RNA replication complex that functions in virion assembly and antagonizes the host immune response. Required cofactor for the serine protease function of NS3. May have membrane-destabilizing activity and form viroporins. Its function is as follows. Displays three enzymatic activities: serine protease, NTPase and RNA helicase. NS3 serine protease, in association with NS2B, performs its autocleavage and cleaves the polyprotein at dibasic sites in the cytoplasm: C-prM, NS2A-NS2B, NS2B-NS3, NS3-NS4A, NS4A-2K and NS4B-NS5. NS3 RNA helicase binds RNA and unwinds dsRNA in the 3' to 5' direction. In terms of biological role, regulates the ATPase activity of the NS3 helicase activity. NS4A allows NS3 helicase to conserve energy during unwinding. Functionally, functions as a signal peptide for NS4B and is required for the interferon antagonism activity of the latter. Induces the formation of ER-derived membrane vesicles where the viral replication takes place. Inhibits interferon (IFN)-induced host STAT1 phosphorylation and nuclear translocation, thereby preventing the establishment of cellular antiviral state by blocking the IFN-alpha/beta pathway. Inhibits STAT2 translocation in the nucleus after IFN-alpha treatment. Its function is as follows. Replicates the viral (+) and (-) genome, and performs the capping of genomes in the cytoplasm. NS5 methylates viral RNA cap at guanine N-7 and ribose 2'-O positions. Besides its role in RNA genome replication, also prevents the establishment of cellular antiviral state by blocking the interferon-alpha/beta (IFN-alpha/beta) signaling pathway. Inhibits host TYK2 and STAT2 phosphorylation, thereby preventing activation of JAK-STAT signaling pathway. The sequence is that of Genome polyprotein from Tick-borne encephalitis virus European subtype (strain Neudoerfl) (NEUV).